The chain runs to 319 residues: Cytochrome f (319 aa).

Residues 1–35 (MFQQMQKISLKLLKTTFLFLFATFILVGLPSTSQA) form the signal peptide. Residues Y36, C56, C59, and H60 each coordinate heme. Residues 285–305 (IQGLIAFFISVIIAQTFLVLK) form a helical membrane-spanning segment.

This sequence belongs to the cytochrome f family. As to quaternary structure, the 4 large subunits of the cytochrome b6-f complex are cytochrome b6, subunit IV (17 kDa polypeptide, petD), cytochrome f and the Rieske protein, while the 4 small subunits are PetG, PetL, PetM and PetN. The complex functions as a dimer. It depends on heme as a cofactor.

It is found in the plastid. The protein resides in the chloroplast thylakoid membrane. Its function is as follows. Component of the cytochrome b6-f complex, which mediates electron transfer between photosystem II (PSII) and photosystem I (PSI), cyclic electron flow around PSI, and state transitions. The sequence is that of Cytochrome f from Chlorokybus atmophyticus (Soil alga).